A 199-amino-acid polypeptide reads, in one-letter code: 7-methyl-GTP pyrophosphatase (199 aa).

Catalysis depends on D72, which acts as the Proton acceptor.

This sequence belongs to the Maf family. YceF subfamily. A divalent metal cation is required as a cofactor.

The protein resides in the cytoplasm. It catalyses the reaction N(7)-methyl-GTP + H2O = N(7)-methyl-GMP + diphosphate + H(+). Functionally, nucleoside triphosphate pyrophosphatase that hydrolyzes 7-methyl-GTP (m(7)GTP). May have a dual role in cell division arrest and in preventing the incorporation of modified nucleotides into cellular nucleic acids. The protein is 7-methyl-GTP pyrophosphatase of Alkalilimnicola ehrlichii (strain ATCC BAA-1101 / DSM 17681 / MLHE-1).